The chain runs to 130 residues: Small ribosomal subunit protein uS8 (130 aa).

This sequence belongs to the universal ribosomal protein uS8 family. As to quaternary structure, part of the 30S ribosomal subunit.

Its function is as follows. One of the primary rRNA binding proteins, it binds directly to 16S rRNA central domain where it helps coordinate assembly of the platform of the 30S subunit. This Pyrobaculum calidifontis (strain DSM 21063 / JCM 11548 / VA1) protein is Small ribosomal subunit protein uS8.